A 134-amino-acid chain; its full sequence is Translation initiation factor 2 subunit beta (134 aa).

The segment covering 1–12 has biased composition (basic and acidic residues); that stretch reads MGYEEQLDRALE. Positions 1 to 32 are disordered; the sequence is MGYEEQLDRALEETPDIEGTAARFSVPDPDVR.

It belongs to the eIF-2-beta/eIF-5 family. As to quaternary structure, heterotrimer composed of an alpha, a beta and a gamma chain.

In terms of biological role, eIF-2 functions in the early steps of protein synthesis by forming a ternary complex with GTP and initiator tRNA. The sequence is that of Translation initiation factor 2 subunit beta from Natronomonas pharaonis (strain ATCC 35678 / DSM 2160 / CIP 103997 / JCM 8858 / NBRC 14720 / NCIMB 2260 / Gabara) (Halobacterium pharaonis).